A 187-amino-acid polypeptide reads, in one-letter code: Insulin-like growth factor 2 (187 aa).

Residues Met1–Ala23 form the signal peptide. Residues Tyr25–Phe51 form a b region. Intrachain disulfides connect Cys32–Cys71, Cys44–Cys84, and Cys70–Cys75. The segment at Ser52–Arg64 is c. The a stretch occupies residues Arg64 to Ala85. The d stretch occupies residues Lys86–Glu91. Residues Arg92 to Glu187 constitute a propeptide, e peptide. Positions His162–Glu187 are disordered.

This sequence belongs to the insulin family.

The protein resides in the secreted. The insulin-like growth factors, isolated from plasma, are structurally and functionally related to insulin but have a much higher growth-promoting activity. Acts as a ligand for integrin which is required for IGF2 signaling. The protein is Insulin-like growth factor 2 of Gallus gallus (Chicken).